Here is a 634-residue protein sequence, read N- to C-terminus: Growth hormone receptor (634 aa).

The first 18 residues, 1–18 (MDLWQLLLTLAVAGSSDA), serve as a signal peptide directing secretion. Residues 19 to 260 (FSGSEATPAF…NPSACEEDFQ (242 aa)) are Extracellular-facing. N-linked (GlcNAc...) asparagine glycosylation occurs at Asn-46. Cys-56 and Cys-66 form a disulfide bridge. The N-linked (GlcNAc...) asparagine glycan is linked to Asn-73. Cys-97 and Cys-108 are joined by a disulfide. The N-linked (GlcNAc...) asparagine glycan is linked to Asn-111. Cys-122 and Cys-136 are joined by a disulfide. One can recognise a Fibronectin type-III domain in the interval 147-250 (PPVGLNWTLL…EVLLITFPQM (104 aa)). Asn-152, Asn-157, and Asn-196 each carry an N-linked (GlcNAc...) asparagine glycan. Residues 236–240 (YGKFS) carry the WSXWS motif motif. The helical transmembrane segment at 261–284 (FPWFLIIIFGILGLTVTLFLLIFS) threads the bilayer. At 285–634 (KQQRIKMLIL…STDQLNKIMP (350 aa)) the chain is on the cytoplasmic side. Positions 290–375 (KMLILPPVPV…HEKSLSIFGA (86 aa)) are required for JAK2 binding. The Box 1 motif motif lies at 293 to 301 (ILPPVPVPK). Residues 336 to 345 (DSWVEFIELD) carry the UbE motif motif. Ser-337 is modified (phosphoserine). Residues 451-471 (KPRPLPIGGTESTHQAVHTQL) are disordered. The segment covering 460–471 (TESTHQAVHTQL) has biased composition (polar residues). Phosphotyrosine is present on residues Tyr-483 and Tyr-591.

Belongs to the type I cytokine receptor family. Type 1 subfamily. On growth hormone (GH) binding, forms homodimers and binds JAK2 via a box 1-containing domain. In terms of processing, the soluble form (GHBP) is produced by phorbol ester-promoted proteolytic cleavage at the cell surface (shedding) by ADAM17/TACE. Shedding is inhibited by growth hormone (GH) binding to the receptor probably due to a conformational change in GHR rendering the receptor inaccessible to ADAM17. Post-translationally, on GH binding, phosphorylated on tyrosine residues in the cytoplasmic domain by JAK2. Ubiquitinated by the ECS(SOCS2) complex following ligand-binding and phosphorylation by JAK2, leading to its degradation by the proteasome. Regulation by the ECS(SOCS2) complex acts as a negative feedback loop of growth hormone receptor signaling. Ubiquitination is not sufficient for GHR internalization.

It localises to the cell membrane. The protein resides in the secreted. Its function is as follows. Receptor for pituitary gland growth hormone (GH1) involved in regulating postnatal body growth. On ligand binding, couples to the JAK2/STAT5 pathway. The soluble form (GHBP) acts as a reservoir of growth hormone in plasma and may be a modulator/inhibitor of GH signaling. This is Growth hormone receptor (GHR) from Ovis aries (Sheep).